The primary structure comprises 405 residues: MSTATSSTTSQHHIMGVYNRAPLAFERGRGARLISTEGEEYLDCVAGIATNGLGHAHPALVEVLKAQAEKLWHVSNIYRIPEQEELADALCANSFADVVFFTNSGTEAVECALKTARKYHSANGQPERIDIYGFDGSFHGRTYAAVNASGNPSYVDGFGPRLPGYSQLTFGDHDAIKAAIASPTTAAIIVEPVQGEGGARSIPTQCLVGLRQLCDEHGVLLIYDEVQCGMGRTGKLFAYEWAEGGEPHIMAVAKALGGGFPIGACLATTEAAKGMTVAAHGSTFGGNPLAMAVGKAALEIIKSPETLDNVKTVSGFFTQQLNGLKDRFPDVIVDVRGKGMLIGVKLIPNNRDFMVLARDEKLLIAGGGDNCVRLLPPLNLTIEEASEAIAKLEKACEAARAKAAA.

Pyridoxal 5'-phosphate is bound by residues G105–T106 and F138. N(2)-acetyl-L-ornithine is bound at residue R141. Position 224–227 (D224–Q227) interacts with pyridoxal 5'-phosphate. Position 254 is an N6-(pyridoxal phosphate)lysine (K254). Position 282 (S282) interacts with N(2)-acetyl-L-ornithine. Residue T283 participates in pyridoxal 5'-phosphate binding.

This sequence belongs to the class-III pyridoxal-phosphate-dependent aminotransferase family. ArgD subfamily. Homodimer. Pyridoxal 5'-phosphate is required as a cofactor.

It is found in the cytoplasm. The enzyme catalyses N(2)-acetyl-L-ornithine + 2-oxoglutarate = N-acetyl-L-glutamate 5-semialdehyde + L-glutamate. The protein operates within amino-acid biosynthesis; L-arginine biosynthesis; N(2)-acetyl-L-ornithine from L-glutamate: step 4/4. In Caulobacter vibrioides (strain ATCC 19089 / CIP 103742 / CB 15) (Caulobacter crescentus), this protein is Acetylornithine aminotransferase 2.